Here is a 279-residue protein sequence, read N- to C-terminus: Early nodulin-like protein 18 (279 aa).

The first 24 residues, Met-1 to Ala-24, serve as a signal peptide directing secretion. Positions Thr-25–Ala-133 constitute a Phytocyanin domain. A disulfide bond links Cys-82 and Cys-121. An N-linked (GlcNAc...) asparagine glycan is attached at Asn-83. The interval Arg-138–Ala-256 is disordered. Residues Ala-140 to Ala-168 show a composition bias toward pro residues. The segment covering Pro-169–Pro-185 has biased composition (low complexity). A compositionally biased stretch (pro residues) spans Ser-186–Ala-199. Low complexity-rich tracts occupy residues Ala-212–Ala-226 and Thr-234–Ala-256. N-linked (GlcNAc...) asparagine glycosylation occurs at Asn-238. Residue Ser-251 is the site of GPI-anchor amidated serine attachment. A propeptide spans Gly-252–Ile-279 (removed in mature form).

Belongs to the early nodulin-like (ENODL) family. In terms of tissue distribution, specifically expressed in reproductive tissues. Mainly observed in developing seeds and in mature leaves.

It localises to the cell membrane. In terms of biological role, may act as a carbohydrate transporter. Promotes tolerance to salt stress in a redox-dependent manner. The polypeptide is Early nodulin-like protein 18 (Oryza sativa subsp. japonica (Rice)).